The sequence spans 492 residues: Cobyric acid synthase (492 aa).

Positions 253–441 constitute a GATase cobBQ-type domain; that stretch reads VLKVIAPVYP…LHGLFDTPQA (189 aa). Catalysis depends on Cys-334, which acts as the Nucleophile. Residue His-433 is part of the active site.

It belongs to the CobB/CobQ family. CobQ subfamily.

Its pathway is cofactor biosynthesis; adenosylcobalamin biosynthesis. Its function is as follows. Catalyzes amidations at positions B, D, E, and G on adenosylcobyrinic A,C-diamide. NH(2) groups are provided by glutamine, and one molecule of ATP is hydrogenolyzed for each amidation. In Azoarcus sp. (strain BH72), this protein is Cobyric acid synthase.